The primary structure comprises 97 residues: MDFSQLSGLLDGVKKEFSQLEEKNKDTIYTSKSGGGMVSVSFNGVGELVDLQIDDSLLEDKEAMQIYLMSALNDGYKSVEENRKNLAFSMLGNFAKL.

Belongs to the YbaB/EbfC family. Homodimer.

The protein resides in the cytoplasm. It localises to the nucleoid. Functionally, binds to DNA and alters its conformation. May be involved in regulation of gene expression, nucleoid organization and DNA protection. The chain is Nucleoid-associated protein Hac_0048 from Helicobacter acinonychis (strain Sheeba).